Consider the following 468-residue polypeptide: Shaggy-related protein kinase theta (468 aa).

2 disordered regions span residues 1 to 53 and 91 to 112; these read MNVM…DQST and HANR…CGTE. Residues 134–418 form the Protein kinase domain; that stretch reads YMAQRVVGTG…ALEACAHPFF (285 aa). ATP is bound by residues 140–148 and Lys163; that span reads VGTGSFGVV. Asp259 (proton acceptor) is an active-site residue. Position 294 is a phosphotyrosine (Tyr294).

It belongs to the protein kinase superfamily. CMGC Ser/Thr protein kinase family. GSK-3 subfamily. Autophosphorylated mainly on threonine and serine residues. In developing pollen.

It catalyses the reaction L-seryl-[protein] + ATP = O-phospho-L-seryl-[protein] + ADP + H(+). It carries out the reaction L-threonyl-[protein] + ATP = O-phospho-L-threonyl-[protein] + ADP + H(+). May mediate extracellular signals to regulate transcription in differentiating cells. The polypeptide is Shaggy-related protein kinase theta (Brassica napus (Rape)).